The following is a 219-amino-acid chain: Probable nicotinate-nucleotide adenylyltransferase (219 aa).

The protein belongs to the NadD family.

The enzyme catalyses nicotinate beta-D-ribonucleotide + ATP + H(+) = deamido-NAD(+) + diphosphate. It functions in the pathway cofactor biosynthesis; NAD(+) biosynthesis; deamido-NAD(+) from nicotinate D-ribonucleotide: step 1/1. Functionally, catalyzes the reversible adenylation of nicotinate mononucleotide (NaMN) to nicotinic acid adenine dinucleotide (NaAD). This is Probable nicotinate-nucleotide adenylyltransferase from Erythrobacter litoralis (strain HTCC2594).